The sequence spans 361 residues: Histidine biosynthesis bifunctional protein HisB (361 aa).

Residues 1–172 form a histidinol-phosphatase region; that stretch reads MSQPTLFIDR…PKTTACERPP (172 aa). Residue Asp-9 is the Nucleophile of the active site. Mg(2+) contacts are provided by Asp-9 and Asp-11. Asp-11 functions as the Proton donor in the catalytic mechanism. Zn(2+)-binding residues include Cys-92, His-94, Cys-100, and Cys-102. Asp-129 serves as a coordination point for Mg(2+). The imidazoleglycerol-phosphate dehydratase stretch occupies residues 173 to 361; it reads RYAEVVRTTK…NELPSSKGVL (189 aa).

In the N-terminal section; belongs to the histidinol-phosphatase family. It in the C-terminal section; belongs to the imidazoleglycerol-phosphate dehydratase family. The cofactor is Mg(2+). Zn(2+) serves as cofactor.

The protein resides in the cytoplasm. The enzyme catalyses D-erythro-1-(imidazol-4-yl)glycerol 3-phosphate = 3-(imidazol-4-yl)-2-oxopropyl phosphate + H2O. It carries out the reaction L-histidinol phosphate + H2O = L-histidinol + phosphate. The protein operates within amino-acid biosynthesis; L-histidine biosynthesis; L-histidine from 5-phospho-alpha-D-ribose 1-diphosphate: step 6/9. It functions in the pathway amino-acid biosynthesis; L-histidine biosynthesis; L-histidine from 5-phospho-alpha-D-ribose 1-diphosphate: step 8/9. This Actinobacillus pleuropneumoniae serotype 7 (strain AP76) protein is Histidine biosynthesis bifunctional protein HisB.